The chain runs to 500 residues: Protein DETOXIFICATION 29 (500 aa).

Helical transmembrane passes span 67-87 (GAITQVFAGHISTIALAAVSV), 91-111 (VVAGFSFGIMLGMGSALETLC), 132-152 (VILNVTALILSLLYIFAAPIL), 161-181 (ISSAAGIFSIYMIPQIFAYAI), 197-217 (VMAVISAVALVIHVPLTWFVI), 227-247 (LAVVLNASWCFIDMAQLVYIF), 277-297 (AVMLCLEVWYFMAIILFAGYL), 302-322 (ISVAALSICMNILGWTAMIAI), 349-369 (LVAVITSTLIGFIVSMILLIF), 393-413 (ILALSIVINNVQPVLSGVAVG), 419-439 (VVAYVNIACYYVFGIPFGLLL), and 449-469 (GIWCGMLTGTVVQTIVLTWMI).

It belongs to the multi antimicrobial extrusion (MATE) (TC 2.A.66.1) family.

It localises to the vacuole membrane. The protein is Protein DETOXIFICATION 29 of Arabidopsis thaliana (Mouse-ear cress).